The primary structure comprises 276 residues: Large ribosomal subunit protein uL2 (276 aa).

Disordered regions lie at residues 36–55 (PLPRKAGRNNQGKLTVRHRG) and 219–276 (TVRG…GRKK). Basic residues predominate over residues 255-276 (LGKKTRKKKNRSNKLIVRGRKK).

It belongs to the universal ribosomal protein uL2 family. In terms of assembly, part of the 50S ribosomal subunit. Forms a bridge to the 30S subunit in the 70S ribosome.

Functionally, one of the primary rRNA binding proteins. Required for association of the 30S and 50S subunits to form the 70S ribosome, for tRNA binding and peptide bond formation. It has been suggested to have peptidyltransferase activity; this is somewhat controversial. Makes several contacts with the 16S rRNA in the 70S ribosome. This chain is Large ribosomal subunit protein uL2, found in Macrococcus caseolyticus (strain JCSC5402) (Macrococcoides caseolyticum).